The primary structure comprises 184 residues: Protein GrpE (184 aa).

The protein belongs to the GrpE family. As to quaternary structure, homodimer.

The protein resides in the cytoplasm. In terms of biological role, participates actively in the response to hyperosmotic and heat shock by preventing the aggregation of stress-denatured proteins, in association with DnaK and GrpE. It is the nucleotide exchange factor for DnaK and may function as a thermosensor. Unfolded proteins bind initially to DnaJ; upon interaction with the DnaJ-bound protein, DnaK hydrolyzes its bound ATP, resulting in the formation of a stable complex. GrpE releases ADP from DnaK; ATP binding to DnaK triggers the release of the substrate protein, thus completing the reaction cycle. Several rounds of ATP-dependent interactions between DnaJ, DnaK and GrpE are required for fully efficient folding. This chain is Protein GrpE, found in Pseudomonas putida (strain GB-1).